A 215-amino-acid chain; its full sequence is Adenylate kinase (215 aa).

An ATP-binding site is contributed by 10–15 (GTGKGT). Positions 30-59 (STGHILRKISTKKTLFGEKIKNIINSGKLV) are NMP. AMP contacts are provided by residues Thr31, Arg36, 57–59 (KLV), 85–88 (GFPR), and Gln92. Residues 122 to 157 (TRTINPITGTIYNNVIQKNSELKNLKINTLKSRLDD) are LID. ATP-binding positions include Arg123 and 132 to 133 (IY). Residues Arg154 and Arg165 each contribute to the AMP site. Asn198 serves as a coordination point for ATP.

The protein belongs to the adenylate kinase family. As to quaternary structure, monomer.

It localises to the cytoplasm. The enzyme catalyses AMP + ATP = 2 ADP. Its pathway is purine metabolism; AMP biosynthesis via salvage pathway; AMP from ADP: step 1/1. In terms of biological role, catalyzes the reversible transfer of the terminal phosphate group between ATP and AMP. Plays an important role in cellular energy homeostasis and in adenine nucleotide metabolism. In Buchnera aphidicola subsp. Baizongia pistaciae (strain Bp), this protein is Adenylate kinase.